A 194-amino-acid polypeptide reads, in one-letter code: Adenylate kinase (194 aa).

10–15 is an ATP binding site; the sequence is GAGKGT. The interval 30-59 is NMP; sequence STGDMLRAAVAQQSEIGKRAKAVMDAGQLV. AMP-binding positions include T31, R36, 57-59, 85-88, and Q92; these read QLV and GYPR. Residues 126-142 are LID; that stretch reads SRVAETIAKGGQVRSDD. R127 is an ATP binding site. AMP-binding residues include R139 and R150. A178 is an ATP binding site.

This sequence belongs to the adenylate kinase family. In terms of assembly, monomer.

The protein resides in the cytoplasm. The enzyme catalyses AMP + ATP = 2 ADP. The protein operates within purine metabolism; AMP biosynthesis via salvage pathway; AMP from ADP: step 1/1. In terms of biological role, catalyzes the reversible transfer of the terminal phosphate group between ATP and AMP. Plays an important role in cellular energy homeostasis and in adenine nucleotide metabolism. The sequence is that of Adenylate kinase from Brucella canis (strain ATCC 23365 / NCTC 10854 / RM-666).